Reading from the N-terminus, the 61-residue chain is Small ribosomal subunit protein uS14 (61 aa).

Positions 24, 27, 40, and 43 each coordinate Zn(2+).

Belongs to the universal ribosomal protein uS14 family. Zinc-binding uS14 subfamily. In terms of assembly, part of the 30S ribosomal subunit. Contacts proteins S3 and S10. Requires Zn(2+) as cofactor.

Binds 16S rRNA, required for the assembly of 30S particles and may also be responsible for determining the conformation of the 16S rRNA at the A site. The polypeptide is Small ribosomal subunit protein uS14 (Thermotoga maritima (strain ATCC 43589 / DSM 3109 / JCM 10099 / NBRC 100826 / MSB8)).